We begin with the raw amino-acid sequence, 882 residues long: MNAPAKFSTSQIRSDFLAFFEGKGHTIVPSAPLVPGNDPTLLFTNSGMVQFKDVFLGAEKRSYVRAADVQRCLRAGGKHNDLDSVGYTARHHTFFEMLGNWSFGDYFKKDAIAWAWELLTQVWKLPADRLLVTVYHTDEEAFELWRDMIGIPESRIVRIGDNKGAPYASDNFWQMADTGPCGPCTEIFFDHGDHIAGGPPGSPDEDGDRFIEIWNLVFMQFDRQPDGTLVPLPAPCVDTGMGLERLAAILQHVHTNYEIDVFQALIGKASALTGIADLENKSLRVIADHIRACSFLIVDGVLPSNEGRGYVLRRIIRRALRHGWMLGVRQLFFSKMVPTLVELMGEAYPELVVAQETVARALLAEEERFAETLDAGMKIFDDVASRSQEIIPGADAFRLYDTYGFPVDLTADIARERGMRVDMEGFEFAMERQRETARAAGKFGGGVALPADLVATMAPTVFLGYEAQDADALKVVALLKQGRPVDRAEAGDEVIVFTDRTPFYAESGGQVGDSGQLSGTDVSIEVADTQKFAGQFHGHVGRIAEGALKLGDVLSGGIDVQRRGKTILNHSATHLLHAALREVLGTHVQQKGSLVAPDRLRFDFSHFQPITAEELAVIERKVNAEVRTNHSVEVHNMAMQEALDFGAMALFGEKYGERVRVLKMGGYSTELCGGTHVSRTGDIGLFKITSEGGVSSGVRRIEAVTGQGALDYVAEEERRLGEAANLLGGNSTEIVDKVRALTDRQKRLERELESLKAKLASGATADLGASAVDVAGVKVIAVRLEGFDAKALREAMDRLKQQLGDSVIVLAGAAGGKVALVAGVNGGPTGKVKAGELLGHIASQIGGKGGGRPDLAQGGGEDGPALATALQGVPSWVKQHLG.

Residues His570, His574, Cys672, and His676 each coordinate Zn(2+).

Belongs to the class-II aminoacyl-tRNA synthetase family. Requires Zn(2+) as cofactor.

The protein localises to the cytoplasm. It carries out the reaction tRNA(Ala) + L-alanine + ATP = L-alanyl-tRNA(Ala) + AMP + diphosphate. Its function is as follows. Catalyzes the attachment of alanine to tRNA(Ala) in a two-step reaction: alanine is first activated by ATP to form Ala-AMP and then transferred to the acceptor end of tRNA(Ala). Also edits incorrectly charged Ser-tRNA(Ala) and Gly-tRNA(Ala) via its editing domain. The protein is Alanine--tRNA ligase of Xanthomonas campestris pv. campestris (strain 8004).